The following is a 154-amino-acid chain: tRNA (cytidine(34)-2'-O)-methyltransferase (154 aa).

Residues Leu78, Gly100, Leu122, and Ser130 each coordinate S-adenosyl-L-methionine.

Belongs to the class IV-like SAM-binding methyltransferase superfamily. RNA methyltransferase TrmH family. TrmL subfamily. As to quaternary structure, homodimer.

Its subcellular location is the cytoplasm. The enzyme catalyses cytidine(34) in tRNA + S-adenosyl-L-methionine = 2'-O-methylcytidine(34) in tRNA + S-adenosyl-L-homocysteine + H(+). It carries out the reaction 5-carboxymethylaminomethyluridine(34) in tRNA(Leu) + S-adenosyl-L-methionine = 5-carboxymethylaminomethyl-2'-O-methyluridine(34) in tRNA(Leu) + S-adenosyl-L-homocysteine + H(+). Methylates the ribose at the nucleotide 34 wobble position in the two leucyl isoacceptors tRNA(Leu)(CmAA) and tRNA(Leu)(cmnm5UmAA). Catalyzes the methyl transfer from S-adenosyl-L-methionine to the 2'-OH of the wobble nucleotide. In Methylovorus glucosotrophus (strain SIP3-4), this protein is tRNA (cytidine(34)-2'-O)-methyltransferase.